The sequence spans 95 residues: Protein TusB (95 aa).

Belongs to the DsrH/TusB family. Heterohexamer, formed by a dimer of trimers. The hexameric TusBCD complex contains 2 copies each of TusB, TusC and TusD. The TusBCD complex interacts with TusE.

Its subcellular location is the cytoplasm. Functionally, part of a sulfur-relay system required for 2-thiolation of 5-methylaminomethyl-2-thiouridine (mnm(5)s(2)U) at tRNA wobble positions. The protein is Protein TusB of Klebsiella pneumoniae subsp. pneumoniae (strain ATCC 700721 / MGH 78578).